Consider the following 59-residue polypeptide: Dimethylamine corrinoid protein (59 aa).

Residues 1–59 enclose the B12-binding domain; it reads TLQGQKDVIELLKEEGLRDKIKVMVGGAPATQAWADKIGADCYAENASEAVAKAKELLA.

Belongs to the methylamine corrinoid protein family.

It functions in the pathway one-carbon metabolism; methanogenesis from dimethylamine. Acts as a methyl group carrier between MtbB and MtbA. In Methanosarcina thermophila, this protein is Dimethylamine corrinoid protein (mtbC).